Consider the following 280-residue polypeptide: Large ribosomal subunit protein uL2 (280 aa).

2 disordered regions span residues S27–H58 and M226–R280. Composition is skewed to basic residues over residues L37–H58 and I268–R280.

The protein belongs to the universal ribosomal protein uL2 family. Part of the 50S ribosomal subunit. Forms a bridge to the 30S subunit in the 70S ribosome.

In terms of biological role, one of the primary rRNA binding proteins. Required for association of the 30S and 50S subunits to form the 70S ribosome, for tRNA binding and peptide bond formation. It has been suggested to have peptidyltransferase activity; this is somewhat controversial. Makes several contacts with the 16S rRNA in the 70S ribosome. This chain is Large ribosomal subunit protein uL2, found in Mycobacterium ulcerans (strain Agy99).